The primary structure comprises 490 residues: GTPase Der (490 aa).

2 consecutive EngA-type G domains span residues 3–166 (PVVA…MDDV) and 203–376 (IKLA…DSST). Residues 9–16 (GRPNVGKS), 56–60 (DTGGI), 118–121 (NKTD), 209–216 (GRPNVGKS), 256–260 (DTAGV), and 321–324 (NKWD) each bind GTP. The KH-like domain occupies 377 to 461 (RRVSTAMLTR…PIRIQFKEGE (85 aa)).

Belongs to the TRAFAC class TrmE-Era-EngA-EngB-Septin-like GTPase superfamily. EngA (Der) GTPase family. Associates with the 50S ribosomal subunit.

Functionally, GTPase that plays an essential role in the late steps of ribosome biogenesis. In Salmonella gallinarum (strain 287/91 / NCTC 13346), this protein is GTPase Der.